Reading from the N-terminus, the 445-residue chain is Glucose-6-phosphate isomerase (445 aa).

Glutamate 284 (proton donor) is an active-site residue. Residues histidine 305 and lysine 419 contribute to the active site.

This sequence belongs to the GPI family.

Its subcellular location is the cytoplasm. The enzyme catalyses alpha-D-glucose 6-phosphate = beta-D-fructose 6-phosphate. The protein operates within carbohydrate biosynthesis; gluconeogenesis. Its pathway is carbohydrate degradation; glycolysis; D-glyceraldehyde 3-phosphate and glycerone phosphate from D-glucose: step 2/4. Its function is as follows. Catalyzes the reversible isomerization of glucose-6-phosphate to fructose-6-phosphate. In Leptospira interrogans serogroup Icterohaemorrhagiae serovar Lai (strain 56601), this protein is Glucose-6-phosphate isomerase.